The sequence spans 240 residues: Ribonuclease 3 (240 aa).

Positions 10 to 136 (VREFQETVGV…LIGAVYLDRG (127 aa)) constitute an RNase III domain. E49 contacts Mg(2+). D53 is an active-site residue. 2 residues coordinate Mg(2+): D122 and E125. E125 is a catalytic residue. Residues 163 to 231 (DWKTSLQELT…AESAWKAIRA (69 aa)) form the DRBM domain. The tract at residues 205–240 (TYGSGEGRSKKEAEQQAAESAWKAIRAATEKAKQES) is disordered. The span at 219 to 228 (QQAAESAWKA) shows a compositional bias: low complexity.

The protein belongs to the ribonuclease III family. In terms of assembly, homodimer. Mg(2+) is required as a cofactor.

The protein localises to the cytoplasm. The catalysed reaction is Endonucleolytic cleavage to 5'-phosphomonoester.. Digests double-stranded RNA. Involved in the processing of primary rRNA transcript to yield the immediate precursors to the large and small rRNAs (23S and 16S). Processes some mRNAs, and tRNAs when they are encoded in the rRNA operon. Processes pre-crRNA and tracrRNA of type II CRISPR loci if present in the organism. This is Ribonuclease 3 from Thermobifida fusca (strain YX).